The following is a 394-amino-acid chain: Phosphopentomutase (394 aa).

6 residues coordinate Mn(2+): aspartate 14, aspartate 287, histidine 292, aspartate 328, histidine 329, and histidine 340.

This sequence belongs to the phosphopentomutase family. Mn(2+) serves as cofactor.

It localises to the cytoplasm. The catalysed reaction is 2-deoxy-alpha-D-ribose 1-phosphate = 2-deoxy-D-ribose 5-phosphate. The enzyme catalyses alpha-D-ribose 1-phosphate = D-ribose 5-phosphate. It functions in the pathway carbohydrate degradation; 2-deoxy-D-ribose 1-phosphate degradation; D-glyceraldehyde 3-phosphate and acetaldehyde from 2-deoxy-alpha-D-ribose 1-phosphate: step 1/2. Functionally, isomerase that catalyzes the conversion of deoxy-ribose 1-phosphate (dRib-1-P) and ribose 1-phosphate (Rib-1-P) to deoxy-ribose 5-phosphate (dRib-5-P) and ribose 5-phosphate (Rib-5-P), respectively. The chain is Phosphopentomutase from Listeria monocytogenes serovar 1/2a (strain ATCC BAA-679 / EGD-e).